A 663-amino-acid polypeptide reads, in one-letter code: Protein pat-12 (663 aa).

The segment covering 1-15 has biased composition (polar residues); it reads MTSHIATETSVNRWS. 4 disordered regions span residues 1–78, 367–430, 517–546, and 597–663; these read MTSH…SGDY, RFEE…GQET, FRRG…DYRR, and PMPA…RRRR. Positions 367-380 are enriched in basic and acidic residues; it reads RFEETRRTEEVERR. A compositionally biased stretch (basic residues) spans 381–400; that stretch reads VQRREKKERRSRHHSSSRHH. Residues 517–526 are compositionally biased toward polar residues; sequence FRRGSQQQVS. 2 stretches are compositionally biased toward basic and acidic residues: residues 620–640 and 649–663; these read FNKE…KPVD and NYKR…RRRR.

Interacts with vab-10 (via plankin domain). Isoform a: Expressed in the uterus, the vulva, the rectum, mechanosensory neurons and in head and tail neurons. Isoform e: Expressed in spermatheca and weakly in the vulva. Isoform f: Expressed in spermatheca and weakly in the vulva. Isoform i: Expressed in spermatheca and weakly in the vulva.

The protein localises to the apical cell membrane. The protein resides in the basal cell membrane. It is found in the cytoplasm. It localises to the cell junction. Its subcellular location is the hemidesmosome. The protein localises to the cell membrane. The protein resides in the cytoskeleton. In terms of biological role, required for embryonic morphology and development. Plays both a functional and a structural role in the maintenance and probably biogenesis of fibrous organelles, a hemidesomosome-like junction structure, which ensures muscle stability and muscle connection to the external cuticle. In Caenorhabditis elegans, this protein is Protein pat-12.